Consider the following 424-residue polypeptide: MSVDSMLCDRIDIAKQLIKRAEALSRSRVGGVEGGAKLCSKLRAELKFLQKVETGKVAIKESHLRSTNLTHLQAVIESAESLEEVVSVLHVFCYNDQFGEKQSLVVDVVANSGHTWVKAIGRKAEALHNIWLGRGQYGDKSIIEQAEDFLQASSQQPVQYSSPHIIFAFYNSVSKPMAEKLKEMGISVRGDIVAVNVSQENSPEENYLSGSESDCDGDDTSVLHVSKVDSENIVASIAFPTEIKVEVCKRVNLDITTLITYVSALSHGGCEWIFKEKVLTEQAAQERQEKVLPLLNSFMEAKELFACECAVKDFQSILETLGGPAEKERAASLVKRITVVPDQPSERALQLASSSKINSRSISIFGTGESLKAITMTANSGFVRAAANQGVKFSVFIHQPRALTESKESSATPLPNNYISSNQL.

This sequence belongs to the UPF0415 family.

This chain is UPF0415 protein C7orf25 homolog, found in Xenopus tropicalis (Western clawed frog).